Here is a 273-residue protein sequence, read N- to C-terminus: MPLSTSLLGKKNTYKDSYDATLLFKIPRINNRNVLGIDSNHLPFYGVDIWNTYEISCLNKNGKPLVGIGTFYIPADSENIVESKSFKLYLNSFNNFIIESIEELERIILQDLSNVTYAKVTGRIFPINTKIEFGIPSGKNIDNLDIVCNNYGPPDNSLIEYEDVLVEEEIYSNLFKSNCLVTGQPDWGTIVIKYKGKKLKYDSFLRYLISFRNFNEFAEQCAERIFIDIKNSINLDFLSIYIVYTRRGGIDICPYRSTDKSYTLPNDKRLIRQ.

81 to 83 (VES) is a binding site for substrate. Position 83 to 84 (83 to 84 (SK)) interacts with NADPH. Catalysis depends on Cys179, which acts as the Thioimide intermediate. Asp186 acts as the Proton donor in catalysis. A substrate-binding site is contributed by 218-219 (AE). 247–248 (RG) is an NADPH binding site.

It belongs to the GTP cyclohydrolase I family. QueF type 2 subfamily. Homodimer.

The protein resides in the cytoplasm. The enzyme catalyses 7-aminomethyl-7-carbaguanine + 2 NADP(+) = 7-cyano-7-deazaguanine + 2 NADPH + 3 H(+). It participates in tRNA modification; tRNA-queuosine biosynthesis. In terms of biological role, catalyzes the NADPH-dependent reduction of 7-cyano-7-deazaguanine (preQ0) to 7-aminomethyl-7-deazaguanine (preQ1). The protein is NADPH-dependent 7-cyano-7-deazaguanine reductase of Rickettsia prowazekii (strain Madrid E).